Here is a 417-residue protein sequence, read N- to C-terminus: Serine hydroxymethyltransferase (417 aa).

(6S)-5,6,7,8-tetrahydrofolate-binding positions include Leu117 and 121 to 123 (GHL). Residue Lys226 is modified to N6-(pyridoxal phosphate)lysine.

It belongs to the SHMT family. In terms of assembly, homodimer. Requires pyridoxal 5'-phosphate as cofactor.

It localises to the cytoplasm. It carries out the reaction (6R)-5,10-methylene-5,6,7,8-tetrahydrofolate + glycine + H2O = (6S)-5,6,7,8-tetrahydrofolate + L-serine. It functions in the pathway one-carbon metabolism; tetrahydrofolate interconversion. Its pathway is amino-acid biosynthesis; glycine biosynthesis; glycine from L-serine: step 1/1. In terms of biological role, catalyzes the reversible interconversion of serine and glycine with tetrahydrofolate (THF) serving as the one-carbon carrier. This reaction serves as the major source of one-carbon groups required for the biosynthesis of purines, thymidylate, methionine, and other important biomolecules. Also exhibits THF-independent aldolase activity toward beta-hydroxyamino acids, producing glycine and aldehydes, via a retro-aldol mechanism. This chain is Serine hydroxymethyltransferase, found in Shouchella clausii (strain KSM-K16) (Alkalihalobacillus clausii).